The primary structure comprises 821 residues: Envelope glycoprotein H (821 aa).

A signal peptide spans M1–T20. The Virion surface portion of the chain corresponds to G21 to S783. Residue N66 is glycosylated (N-linked (GlcNAc...) asparagine; by host). The interval Q163 to G186 is disordered. Residues N236, N241, N308, N414, N492, N647, N741, and N764 are each glycosylated (N-linked (GlcNAc...) asparagine; by host). Residues N236–V299 form an interaction with gL region. A helical membrane pass occupies residues N784–I804. Over K805–N821 the chain is Intravirion.

The protein belongs to the herpesviridae glycoprotein H family. As to quaternary structure, interacts with glycoprotein L (gL); this interaction is necessary for the correct processing and cell surface expression of gH. The heterodimer gH/gL seems to interact with gB trimers during fusion. Post-translationally, N-glycosylated, O-glycosylated, and sialylated.

Its subcellular location is the virion membrane. It is found in the host cell membrane. The protein resides in the host endosome membrane. In terms of biological role, the heterodimer glycoprotein H-glycoprotein L is required for the fusion of viral and plasma membranes leading to virus entry into the host cell. Following initial binding to host receptor, membrane fusion is mediated by the fusion machinery composed of gB and the heterodimer gH/gL. May also be involved in the fusion between the virion envelope and the outer nuclear membrane during virion morphogenesis. In Feline herpesvirus 1 (FeHV-1), this protein is Envelope glycoprotein H.